Reading from the N-terminus, the 685-residue chain is ATP-dependent permease MDL1 (685 aa).

The span at 48–70 shows a compositional bias: polar residues; sequence FNSKSSTAPNTEANSNGSTNSQS. A disordered region spans residues 48–76; the sequence is FNSKSSTAPNTEANSNGSTNSQSDTKKPR. N63 carries N-linked (GlcNAc...) asparagine glycosylation. Residues 96 to 116 form a helical membrane-spanning segment; the sequence is LIFFALICLVTTSATSMALPL. Residues 97–407 form the ABC transmembrane type-1 domain; that stretch reads IFFALICLVT…LGNFYTELMK (311 aa). Residues 125–147 are disordered; it reads TKKDDDDDKDNDNDDKDDTQPSD. Residues 129–141 are compositionally biased toward acidic residues; sequence DDDDKDNDNDDKD. The helical transmembrane segment at 158–180 threads the bilayer; the sequence is FYSALGVLFIVSASTNFGRIYLL. Residue N239 is glycosylated (N-linked (GlcNAc...) asparagine). Residues 266–282 traverse the membrane as a helical segment; it reads LCMSLIFPPLITMSWFY. N336 is a glycosylation site (N-linked (GlcNAc...) asparagine). Helical transmembrane passes span 353 to 373 and 381 to 401; these read GFIG…LIGA and LSSF…LGNF. In terms of domain architecture, ABC transporter spans 440–680; it reads IEFKGIDFTY…PNSQFNKLLK (241 aa). ATP is bound at residue 475–482; that stretch reads GPSGSGKS. Residues N553 and N576 are each glycosylated (N-linked (GlcNAc...) asparagine).

This sequence belongs to the ABC transporter superfamily. ABCB family. Mitochondrial peptide exporter (TC 3.A.1.212) subfamily.

The protein resides in the membrane. The protein is ATP-dependent permease MDL1 (MDL1) of Candida albicans (Yeast).